The chain runs to 732 residues: Guanylate cyclase soluble subunit alpha-2 (732 aa).

Positions 1–58 (MSRRKISSESFSSLGSDYLETSPEEEGECPLSRLCWNGSRSPPGPLEPSPAAAAAAAA) are disordered. Residues 49-58 (SPAAAAAAAA) show a composition bias toward low complexity. The 128-residue stretch at 521-648 (TMLFSDIVGF…NNVTLASKFE (128 aa)) folds into the Guanylate cyclase domain.

The protein belongs to the adenylyl cyclase class-4/guanylyl cyclase family. Heterodimer of an alpha and a beta chain. In terms of tissue distribution, isoform 1 is expressed in fetal brain, liver, colon, endothelium and testis. Isoform 2 is expressed only in liver, colon and endothelium.

The protein resides in the cytoplasm. It carries out the reaction GTP = 3',5'-cyclic GMP + diphosphate. Activated by nitric oxide in the presence of magnesium or manganese ions. Its function is as follows. Has guanylyl cyclase on binding to the beta-1 subunit. Functionally, isoform 2 acts as a negative regulator of guanylyl cyclase activity as it forms non-functional heterodimers with the beta subunits. This Homo sapiens (Human) protein is Guanylate cyclase soluble subunit alpha-2 (GUCY1A2).